We begin with the raw amino-acid sequence, 359 residues long: 3-dehydroquinate synthase (359 aa).

NAD(+) is bound by residues 71-76 (DGEAYK), 105-109 (GVVGD), 129-130 (TT), Lys-142, and Lys-151. Zn(2+) is bound by residues Glu-184, His-247, and His-264.

The protein belongs to the sugar phosphate cyclases superfamily. Dehydroquinate synthase family. Requires Co(2+) as cofactor. It depends on Zn(2+) as a cofactor. The cofactor is NAD(+).

It is found in the cytoplasm. It carries out the reaction 7-phospho-2-dehydro-3-deoxy-D-arabino-heptonate = 3-dehydroquinate + phosphate. The protein operates within metabolic intermediate biosynthesis; chorismate biosynthesis; chorismate from D-erythrose 4-phosphate and phosphoenolpyruvate: step 2/7. In terms of biological role, catalyzes the conversion of 3-deoxy-D-arabino-heptulosonate 7-phosphate (DAHP) to dehydroquinate (DHQ). This Burkholderia lata (strain ATCC 17760 / DSM 23089 / LMG 22485 / NCIMB 9086 / R18194 / 383) protein is 3-dehydroquinate synthase.